The following is a 386-amino-acid chain: Succinate--CoA ligase [ADP-forming] subunit beta (386 aa).

The ATP-grasp domain occupies lysine 9 to arginine 244. Residues lysine 46, glycine 53–glycine 55, glutamate 99, cysteine 102, and glutamate 107 each bind ATP. Mg(2+)-binding residues include asparagine 199 and aspartate 213. Substrate contacts are provided by residues asparagine 264 and glycine 321–methionine 323.

Belongs to the succinate/malate CoA ligase beta subunit family. Heterotetramer of two alpha and two beta subunits. Requires Mg(2+) as cofactor.

The catalysed reaction is succinate + ATP + CoA = succinyl-CoA + ADP + phosphate. It carries out the reaction GTP + succinate + CoA = succinyl-CoA + GDP + phosphate. Its pathway is carbohydrate metabolism; tricarboxylic acid cycle; succinate from succinyl-CoA (ligase route): step 1/1. Succinyl-CoA synthetase functions in the citric acid cycle (TCA), coupling the hydrolysis of succinyl-CoA to the synthesis of either ATP or GTP and thus represents the only step of substrate-level phosphorylation in the TCA. The beta subunit provides nucleotide specificity of the enzyme and binds the substrate succinate, while the binding sites for coenzyme A and phosphate are found in the alpha subunit. In Rickettsia prowazekii (strain Madrid E), this protein is Succinate--CoA ligase [ADP-forming] subunit beta.